The following is a 108-amino-acid chain: Small proline-rich protein 5 (108 aa).

Residues M1–Q13 are compositionally biased toward low complexity. Disordered regions lie at residues M1 to P24 and P73 to K108. 2 stretches are compositionally biased toward pro residues: residues Q14–P24 and P73–Q100.

Functionally, positively regulates keratinocyte differentiation by inducing genes associated with epidermal differentiation. The chain is Small proline-rich protein 5 from Homo sapiens (Human).